A 702-amino-acid chain; its full sequence is Polyribonucleotide nucleotidyltransferase (702 aa).

Residues aspartate 485 and aspartate 491 each contribute to the Mg(2+) site. The KH domain occupies proline 552–isoleucine 611. An S1 motif domain is found at glycine 621–lysine 689.

This sequence belongs to the polyribonucleotide nucleotidyltransferase family. Mg(2+) serves as cofactor.

Its subcellular location is the cytoplasm. The enzyme catalyses RNA(n+1) + phosphate = RNA(n) + a ribonucleoside 5'-diphosphate. Involved in mRNA degradation. Catalyzes the phosphorolysis of single-stranded polyribonucleotides processively in the 3'- to 5'-direction. This chain is Polyribonucleotide nucleotidyltransferase, found in Clostridium perfringens (strain 13 / Type A).